The sequence spans 1360 residues: DNA-directed RNA polymerase subunit beta (1360 aa).

The protein belongs to the RNA polymerase beta chain family. The RNAP catalytic core consists of 2 alpha, 1 beta, 1 beta' and 1 omega subunit. When a sigma factor is associated with the core the holoenzyme is formed, which can initiate transcription.

It carries out the reaction RNA(n) + a ribonucleoside 5'-triphosphate = RNA(n+1) + diphosphate. In terms of biological role, DNA-dependent RNA polymerase catalyzes the transcription of DNA into RNA using the four ribonucleoside triphosphates as substrates. This chain is DNA-directed RNA polymerase subunit beta, found in Desulfotalea psychrophila (strain LSv54 / DSM 12343).